The chain runs to 252 residues: MIFFDMMHNKASKHGGAVYSLLGNHELMNTQGNFDYVSYENYHNFDYDSPSGEKYTGSLGRQNVFKPGSNFVKKMACNRLSVLVIGSTMFTHAGVLPVLARKLDKLDLDSNKKLEYLNMIVRKWLLNKLSGKQDEEYKSLFINDTKISPFWNRIYGMIPNNTSIDSDQCFNSVKKTLQVFKIGKIVVGHTPQLFTNKDGINGTCYERGEDNKLYRIDGGFADAFNAFNKKHVVQVLEITDDKYFRIITSKKN.

Residues 80-100 (LSVLVIGSTMFTHAGVLPVLA) traverse the membrane as a helical segment.

It localises to the host membrane. The protein resides in the virion. This is an uncharacterized protein from Acanthamoeba polyphaga mimivirus (APMV).